The primary structure comprises 428 residues: MPAPGIFHVCWDGKVPLTYRPHNNGEHHDPTKNQTGSRLVYWRCDSRKRCWRGDYHDQGANHWIDDHIATPMSKYRDYEQSRQSFGINVLGTLIVEVEAENGQTGFAVSTAGEMGCFIVEKHLNRFIEGKCVSDIKLIHDQMLNATLYYSGSGGLVMNTISCVDLALWDLFGKVVGLPVYKLLGGAVRDEIQFYATGARPDLAKEMGFIGGKMPTHWGPHDGDAGIRKDAVMVADMREKCGEDFWLMLDCWMSQDVNYATKLAHACAPYNLKWIEECLPPQQYEGYRELKRNAPVGMMVTSGEHHGTLQSFRTLSETGIDIMQPDVGWCGGLTTLVEIAAIAKSRGQLVVPHGSSVYSHHAVITFTNTPFSEFLMTSPDCSTMRPQFDPILLNEPVPVNGRIHKSVLDKPGFGVELNRDCNLKRPYSH.

2 residues coordinate substrate: H56 and R82. Mg(2+)-binding residues include D249, E275, and E303. H352 serves as the catalytic Proton acceptor. Substrate is bound at residue E372.

The protein belongs to the mandelate racemase/muconate lactonizing enzyme family. RhamD subfamily. As to quaternary structure, homooctamer; tetramer of dimers. The cofactor is Mg(2+).

It carries out the reaction L-rhamnonate = 2-dehydro-3-deoxy-L-rhamnonate + H2O. In terms of biological role, catalyzes the dehydration of L-rhamnonate to 2-keto-3-deoxy-L-rhamnonate (KDR). This is L-rhamnonate dehydratase from Shigella sonnei (strain Ss046).